Consider the following 344-residue polypeptide: UDP-3-O-acylglucosamine N-acyltransferase (344 aa).

Residue His-248 is the Proton acceptor of the active site.

Belongs to the transferase hexapeptide repeat family. LpxD subfamily. In terms of assembly, homotrimer.

It carries out the reaction a UDP-3-O-[(3R)-3-hydroxyacyl]-alpha-D-glucosamine + a (3R)-hydroxyacyl-[ACP] = a UDP-2-N,3-O-bis[(3R)-3-hydroxyacyl]-alpha-D-glucosamine + holo-[ACP] + H(+). It participates in bacterial outer membrane biogenesis; LPS lipid A biosynthesis. Its function is as follows. Catalyzes the N-acylation of UDP-3-O-acylglucosamine using 3-hydroxyacyl-ACP as the acyl donor. Is involved in the biosynthesis of lipid A, a phosphorylated glycolipid that anchors the lipopolysaccharide to the outer membrane of the cell. The chain is UDP-3-O-acylglucosamine N-acyltransferase from Prochlorococcus marinus (strain MIT 9312).